The following is a 220-amino-acid chain: Zinc finger protein 36 (220 aa).

The C2H2-type 1 zinc finger occupies 73–95 (FRCTVCGKAFASYQALGGHKSSH). The interval 90–134 (GHKSSHRKPPSPGDHYGAAAAAQQLASAGDSKEDSASSAAGSTGP) is disordered. A compositionally biased stretch (low complexity) spans 107-117 (AAAAAQQLASA). A C2H2-type 2 zinc finger spans residues 135-157 (HRCTICRRSFATGQALGGHKRCH).

Probable transcription factor involved in abscisic acid (ABA) signaling. Required for the regulation of the cross-talk between NADPH oxidase, hydrogen peroxide and MAP kinase in ABA signaling. Regulates the expression of the NADPH oxidase genes RBOHB and RBOHE, and the MAPK genes MPK1, MPK4, MPK5, MPK7 and MPK14. Regulates ABA-induced hydrogen peroxide production and antioxidant defense. Required for tolerance to water stress and oxidative stress. The protein is Zinc finger protein 36 of Oryza sativa subsp. japonica (Rice).